We begin with the raw amino-acid sequence, 170 residues long: CDP-archaeol synthase (170 aa).

The next 5 helical transmembrane spans lie at 6–26 (LLWA…PVLV), 53–73 (GLIG…FITP), 83–103 (LLLA…GSFF), 114–134 (PAIG…AYPV), and 140–160 (GQII…NYFA).

It belongs to the CDP-archaeol synthase family. Requires Mg(2+) as cofactor.

It is found in the cell membrane. The catalysed reaction is 2,3-bis-O-(geranylgeranyl)-sn-glycerol 1-phosphate + CTP + H(+) = CDP-2,3-bis-O-(geranylgeranyl)-sn-glycerol + diphosphate. Its pathway is membrane lipid metabolism; glycerophospholipid metabolism. In terms of biological role, catalyzes the formation of CDP-2,3-bis-(O-geranylgeranyl)-sn-glycerol (CDP-archaeol) from 2,3-bis-(O-geranylgeranyl)-sn-glycerol 1-phosphate (DGGGP) and CTP. This reaction is the third ether-bond-formation step in the biosynthesis of archaeal membrane lipids. In Thermococcus onnurineus (strain NA1), this protein is CDP-archaeol synthase.